The primary structure comprises 32 residues: MSDIN-like toxin proprotein 1 (32 aa).

A propeptide spanning residues 1-10 (MSDINATCLP) is cleaved from the precursor. Residues 11-17 (AWLALCP) constitute a cross-link (cyclopeptide (Ala-Pro)). A propeptide spanning residues 18-32 (CVGDDVNPTLTRGGT) is cleaved from the precursor.

It belongs to the MSDIN fungal toxin family. Processed by the macrocyclase-peptidase enzyme POPB to yield a toxic cyclic heptapeptide. POPB first removes 10 residues from the N-terminus. Conformational trapping of the remaining peptide forces the enzyme to release this intermediate rather than proceed to macrocyclization. The enzyme rebinds the remaining peptide in a different conformation and catalyzes macrocyclization of the N-terminal 7 residues.

Functionally, probable toxin that belongs to the MSDIN-like toxin family responsible for a large number of food poisoning cases and deaths. This Amanita fuligineoides protein is MSDIN-like toxin proprotein 1.